The chain runs to 262 residues: Shikimate dehydrogenase (NADP(+)) (262 aa).

Residues 15–17 and Thr-62 contribute to the shikimate site; that span reads SRS. Catalysis depends on Lys-66, which acts as the Proton acceptor. Glu-78 provides a ligand contact to NADP(+). Shikimate contacts are provided by Asn-87 and Asp-102. Residues 126–130, 150–155, and Met-214 contribute to the NADP(+) site; these read GAGGA and NRTLAR. Shikimate is bound at residue Tyr-216. Position 236 (Gly-236) interacts with NADP(+).

It belongs to the shikimate dehydrogenase family. In terms of assembly, homodimer.

It catalyses the reaction shikimate + NADP(+) = 3-dehydroshikimate + NADPH + H(+). Its pathway is metabolic intermediate biosynthesis; chorismate biosynthesis; chorismate from D-erythrose 4-phosphate and phosphoenolpyruvate: step 4/7. In terms of biological role, involved in the biosynthesis of the chorismate, which leads to the biosynthesis of aromatic amino acids. Catalyzes the reversible NADPH linked reduction of 3-dehydroshikimate (DHSA) to yield shikimate (SA). The protein is Shikimate dehydrogenase (NADP(+)) of Acinetobacter baumannii (strain AB307-0294).